A 483-amino-acid polypeptide reads, in one-letter code: MGVLSPTRTMRLWGPRSLGVALGVFMTIGFALQLLGGPFQRRLPGLQLRHSWASSLGPAAPSCPPRQHLVFLKTHKSGSSSVLSLLHRYGDRHGLRFALPARYQFGYPRLFQASRVKGYRPQSGGTQPPFHILCHHMRFNLKEVLQVMPSDSFFFSIVRDPAALARSAFSYYKSTSSAFRKAPSLAAFLANPRAFYRPGARGDHYARNLLWFDFGLPFPPELRTKRGNPHVSRDPNPPQLPSGAGPPAHTLDPNALFHPVPIVADGHSQMSSPASLDLGSSSFIQWNLAWLDSVFDLVLVAEYFDESLVLLADALCWGLDDVVGFMHNAQAGGGQDRSTIDDGGLTTEERQLTARARAWNNLDWALYVHFNRSLWARIKQYGQSRLDSAVAELRARREALAKHCLVGGEALDPKYITDRRFRPFQFGSGKVLGYVLRSGLSLQDQEECERLATPELQYKDKLDAKQFPPTVSLPLKTSRRPSP.

The Cytoplasmic portion of the chain corresponds to methionine 1–leucine 18. The chain crosses the membrane as a helical; Signal-anchor for type II membrane protein span at residues glycine 19 to phenylalanine 39. Residues glutamine 40–proline 483 lie on the Lumenal side of the membrane. The interval lysine 225–alanine 248 is disordered. Asparagine 371 is a glycosylation site (N-linked (GlcNAc...) asparagine).

It belongs to the galactose-3-O-sulfotransferase family. Requires Mn(2+) as cofactor.

The protein localises to the golgi apparatus. It is found in the golgi stack membrane. Its pathway is protein modification; carbohydrate sulfation. Functionally, catalyzes the transfer of sulfate to beta-1,3-linked galactose residues in O-linked glycoproteins. Good substrates include asialofetuin, Gal-beta-1,3-GalNAc and Gal-beta-1,3 (GlcNAc-beta-1,6)GalNAc. In Bos taurus (Bovine), this protein is Galactose-3-O-sulfotransferase 4 (GAL3ST4).